Consider the following 197-residue polypeptide: Large ribosomal subunit protein bL25 (197 aa).

This sequence belongs to the bacterial ribosomal protein bL25 family. CTC subfamily. Part of the 50S ribosomal subunit; part of the 5S rRNA/L5/L18/L25 subcomplex. Contacts the 5S rRNA. Binds to the 5S rRNA independently of L5 and L18.

This is one of the proteins that binds to the 5S RNA in the ribosome where it forms part of the central protuberance. The protein is Large ribosomal subunit protein bL25 of Citrifermentans bemidjiense (strain ATCC BAA-1014 / DSM 16622 / JCM 12645 / Bem) (Geobacter bemidjiensis).